A 460-amino-acid polypeptide reads, in one-letter code: Lipase member H-A (460 aa).

A signal peptide spans 1 to 26 (MLLSFYFNGLLLVGCLLSWGRSDTEG). N-linked (GlcNAc...) asparagine glycosylation is found at N67 and N75. The active-site Nucleophile is S163. N177 carries N-linked (GlcNAc...) asparagine glycosylation. D187 functions as the Charge relay system in the catalytic mechanism. A disulfide bond links C242 and C255. The active-site Charge relay system is H257. 2 cysteine pairs are disulfide-bonded: C279/C290 and C293/C301. N-linked (GlcNAc...) asparagine glycosylation is present at N289. An N-linked (GlcNAc...) asparagine glycan is attached at N366. A disulfide bond links C436 and C455.

It belongs to the AB hydrolase superfamily. Lipase family.

The protein resides in the secreted. The protein localises to the cell membrane. The catalysed reaction is 1-hexadecanoyl-2-(9Z-octadecenoyl)-sn-glycero-3-phosphate + H2O = 2-(9Z-octadecenoyl)-sn-glycero-3-phosphate + hexadecanoate + H(+). In terms of biological role, hydrolyzes specifically phosphatidic acid (PA) to produce 2-acyl lysophosphatidic acid (LPA; a potent bioactive lipid mediator) and fatty acid. Does not hydrolyze other phospholipids, like phosphatidylserine (PS), phosphatidylcholine (PC) and phosphatidylethanolamine (PE) or triacylglycerol (TG). The chain is Lipase member H-A (liph-a) from Xenopus laevis (African clawed frog).